The primary structure comprises 449 residues: Trigger factor (449 aa).

The PPIase FKBP-type domain occupies 173 to 258; the sequence is GDRVTVDFVG…MKKVEWPHLP (86 aa).

This sequence belongs to the FKBP-type PPIase family. Tig subfamily.

It localises to the cytoplasm. The catalysed reaction is [protein]-peptidylproline (omega=180) = [protein]-peptidylproline (omega=0). Involved in protein export. Acts as a chaperone by maintaining the newly synthesized protein in an open conformation. Functions as a peptidyl-prolyl cis-trans isomerase. This chain is Trigger factor, found in Burkholderia thailandensis (strain ATCC 700388 / DSM 13276 / CCUG 48851 / CIP 106301 / E264).